A 424-amino-acid chain; its full sequence is Serine--tRNA ligase (424 aa).

233–235 (TAE) is an L-serine binding site. 264–266 (RRE) contributes to the ATP binding site. Glu-287 contributes to the L-serine binding site. 351–354 (EISS) is a binding site for ATP. Ser-386 serves as a coordination point for L-serine.

It belongs to the class-II aminoacyl-tRNA synthetase family. Type-1 seryl-tRNA synthetase subfamily. As to quaternary structure, homodimer. The tRNA molecule binds across the dimer.

The protein resides in the cytoplasm. The catalysed reaction is tRNA(Ser) + L-serine + ATP = L-seryl-tRNA(Ser) + AMP + diphosphate + H(+). It catalyses the reaction tRNA(Sec) + L-serine + ATP = L-seryl-tRNA(Sec) + AMP + diphosphate + H(+). The protein operates within aminoacyl-tRNA biosynthesis; selenocysteinyl-tRNA(Sec) biosynthesis; L-seryl-tRNA(Sec) from L-serine and tRNA(Sec): step 1/1. In terms of biological role, catalyzes the attachment of serine to tRNA(Ser). Is also able to aminoacylate tRNA(Sec) with serine, to form the misacylated tRNA L-seryl-tRNA(Sec), which will be further converted into selenocysteinyl-tRNA(Sec). This is Serine--tRNA ligase from Petrotoga mobilis (strain DSM 10674 / SJ95).